We begin with the raw amino-acid sequence, 352 residues long: MANPTLFVSYDQNGKKLSFANWISVLSPQDTPFVSMTGKESINQTIFSWQTDALASVDGNNAHVEGSRAEDGEMKPTVIKSNVTQILRKVVRVSDTANTTANYGRGRELMYQLEKKGKEIKRDLEKILLSGQARTDVLADQYLTNSATDPAVVGLNDTHAARKTGAFQFLCAHGGLAGGVVDKTKNGPADPDTGAVTVKVAQNASNPTTNIGFDEADIFDMTLQLYTAGSEADIIMINPAHAKIFAGLQENTQGSRKRIFENTKQFIYEVNSITDPLGQSYKIIVNRWMPTDAVYFFRSADWTQMVLRAPKRTELAKDGSYEKWMIEMEVGLRHRNPYASGVLFTAAGKVAA.

The protein localises to the virion. In terms of biological role, assembles to form a prolate capsid of about 145 nm x 44 nm. This chain is Major capsid protein, found in Escherichia coli (Escherichia coli phage phi32).